A 94-amino-acid polypeptide reads, in one-letter code: Co-chaperonin GroES (94 aa).

The protein belongs to the GroES chaperonin family. In terms of assembly, heptamer of 7 subunits arranged in a ring. Interacts with the chaperonin GroEL.

It is found in the cytoplasm. Together with the chaperonin GroEL, plays an essential role in assisting protein folding. The GroEL-GroES system forms a nano-cage that allows encapsulation of the non-native substrate proteins and provides a physical environment optimized to promote and accelerate protein folding. GroES binds to the apical surface of the GroEL ring, thereby capping the opening of the GroEL channel. The protein is Co-chaperonin GroES of Streptococcus pneumoniae (strain Hungary19A-6).